The chain runs to 609 residues: N-acetyltransferase ESCO2 (609 aa).

4 disordered regions span residues 1–71 (MLSR…RVSP), 100–165 (EAKS…TDQV), 197–241 (KKPT…SPVR), and 314–357 (PDHD…LTAT). Composition is skewed to polar residues over residues 13-22 (AESNPSKKQI) and 41-54 (ISLN…STPK). Basic residues predominate over residues 126 to 135 (PAKKVQKKPR). The segment covering 214 to 230 (PTYEKPSIRKPVREKEL) has biased composition (basic and acidic residues). Over residues 345–355 (PLNSSTPSALT) the composition is skewed to polar residues. The segment at 392–416 (TTCASCGMLYSTDSPEDNFQHTQFH) adopts a CCHH-type zinc-finger fold.

The protein belongs to the acetyltransferase family. ECO subfamily.

It localises to the nucleus. It is found in the chromosome. It catalyses the reaction L-lysyl-[protein] + acetyl-CoA = N(6)-acetyl-L-lysyl-[protein] + CoA + H(+). Acetyltransferase required for the establishment of sister chromatid cohesion. Couples the processes of cohesion and DNA replication to ensure that only sister chromatids become paired together. Essential for early development. This chain is N-acetyltransferase ESCO2 (esco2), found in Danio rerio (Zebrafish).